A 94-amino-acid chain; its full sequence is Co-chaperonin GroES (94 aa).

The protein belongs to the GroES chaperonin family. Heptamer of 7 subunits arranged in a ring. Interacts with the chaperonin GroEL.

The protein resides in the cytoplasm. In terms of biological role, together with the chaperonin GroEL, plays an essential role in assisting protein folding. The GroEL-GroES system forms a nano-cage that allows encapsulation of the non-native substrate proteins and provides a physical environment optimized to promote and accelerate protein folding. GroES binds to the apical surface of the GroEL ring, thereby capping the opening of the GroEL channel. The chain is Co-chaperonin GroES from Caldanaerobacter subterraneus subsp. tengcongensis (strain DSM 15242 / JCM 11007 / NBRC 100824 / MB4) (Thermoanaerobacter tengcongensis).